Reading from the N-terminus, the 551-residue chain is Terpene synthase 10 (551 aa).

Mg(2+) contacts are provided by Asp303, Asp307, and Glu455. Positions 303-307 (DDIYD) match the DDXXD motif motif.

This sequence belongs to the terpene synthase family. Requires Mg(2+) as cofactor.

In terms of biological role, catalyzes the cyclization of farnesyl diphosphate to sesquiterpene olefins. This Ricinus communis (Castor bean) protein is Terpene synthase 10 (TPS10).